We begin with the raw amino-acid sequence, 193 residues long: CASP-like protein 1D2 (193 aa).

The Cytoplasmic portion of the chain corresponds to Met1–Asp30. A helical membrane pass occupies residues Val31–Ala51. N-linked (GlcNAc...) asparagine glycosylation is present at Asn52. The Extracellular segment spans residues Asn52–Pro73. A helical transmembrane segment spans residues Ala74 to Leu94. Residues Ala95 to Lys108 lie on the Cytoplasmic side of the membrane. The helical transmembrane segment at Leu109–Gly129 threads the bilayer. At Thr130–His161 the chain is on the extracellular side. A helical transmembrane segment spans residues Val162–Leu182. The Cytoplasmic segment spans residues Ser183 to Lys193.

It belongs to the Casparian strip membrane proteins (CASP) family. In terms of assembly, homodimer and heterodimers.

It localises to the cell membrane. The polypeptide is CASP-like protein 1D2 (Glycine max (Soybean)).